A 312-amino-acid chain; its full sequence is 4-hydroxyphenylacetate decarboxylase activating enzyme (312 aa).

One can recognise a Radical SAM core domain in the interval 16 to 299 (HDGPGCRTSV…MEHLQQLYLD (284 aa)). C30, C34, C37, C56, C62, C65, and C101 together coordinate [4Fe-4S] cluster. 36–38 (WCA) is a binding site for S-adenosyl-L-methionine. 4Fe-4S ferredoxin-type domains lie at 47-79 (KHIM…FSED) and 80-112 (GKLK…CVKE). S-adenosyl-L-methionine-binding positions include G140, 189-191 (DVK), and H263.

This sequence belongs to the organic radical-activating enzymes family. In terms of assembly, monomer. Requires [4Fe-4S] cluster as cofactor.

The catalysed reaction is glycyl-[protein] + reduced [flavodoxin] + S-adenosyl-L-methionine = glycin-2-yl radical-[protein] + semiquinone [flavodoxin] + 5'-deoxyadenosine + L-methionine + H(+). Its function is as follows. Catalyzes activation of 4-hydroxyphenylacetate decarboxylase under anaerobic conditions by generation of an organic free radical on a glycine residue, via a homolytic cleavage of S-adenosyl-L-methionine (SAM). The polypeptide is 4-hydroxyphenylacetate decarboxylase activating enzyme (Clostridium scatologenes).